Here is a 211-residue protein sequence, read N- to C-terminus: tRNA (guanine-N(7)-)-methyltransferase (211 aa).

S-adenosyl-L-methionine contacts are provided by aspartate 40, glutamate 65, asparagine 92, and aspartate 118. The active site involves aspartate 118. Positions 122 and 154 each coordinate substrate.

It belongs to the class I-like SAM-binding methyltransferase superfamily. TrmB family.

It carries out the reaction guanosine(46) in tRNA + S-adenosyl-L-methionine = N(7)-methylguanosine(46) in tRNA + S-adenosyl-L-homocysteine. It functions in the pathway tRNA modification; N(7)-methylguanine-tRNA biosynthesis. In terms of biological role, catalyzes the formation of N(7)-methylguanine at position 46 (m7G46) in tRNA. The polypeptide is tRNA (guanine-N(7)-)-methyltransferase (Microcystis aeruginosa (strain NIES-843 / IAM M-2473)).